The primary structure comprises 724 residues: Tripartite terminase subunit 1 (724 aa).

The C3H1-type zinc finger occupies 175–203; sequence CAVCFEELCVTANQGEATHRRLLGCVCDH. A disordered region spans residues 410–445; sequence GGDDADADGGAAGGADAGDGGVGDEDGPGAPPPADA. Residues 419 to 430 are compositionally biased toward gly residues; the sequence is GAAGGADAGDGG. 652–659 contacts ATP; the sequence is FRSVFHCG.

The protein belongs to the herpesviridae TRM1 protein family. In terms of assembly, associates with TRM2 and TRM3 to form the tripartite terminase complex. Interacts with portal protein.

It is found in the host nucleus. Functionally, component of the molecular motor that translocates viral genomic DNA in empty capsid during DNA packaging. Forms a tripartite terminase complex together with TRM2 and TRM3 in the host cytoplasm. Once the complex reaches the host nucleus, it interacts with the capsid portal vertex. This portal forms a ring in which genomic DNA is translocated into the capsid. TRM1 carries an endonuclease activity that plays an important role for the cleavage of concatemeric viral DNA into unit length genomes. The chain is Tripartite terminase subunit 1 from Suid herpesvirus 1 (strain Indiana-Funkhauser / Becker) (SuHV-1).